Consider the following 153-residue polypeptide: MSENCPCGSELQYSVCCGPYLRGGAYPDTPEALMRSRYCAYAQQNLPYLIASWHPSCNAQNFAASLEESFSNTRWHGLRVISTEVLSDQDTGYVTFFARFSENKQQSFLHERSRFLREEQRWYYIDGTFPPTGRNDRCPCGSGKKYKKCCGQH.

Belongs to the UPF0225 family.

The polypeptide is UPF0225 protein ETA_15740 (Erwinia tasmaniensis (strain DSM 17950 / CFBP 7177 / CIP 109463 / NCPPB 4357 / Et1/99)).